The sequence spans 449 residues: Tripartite motif-containing protein 64 (449 aa).

The RING-type zinc-finger motif lies at cysteine 15–arginine 56. The segment at serine 87–isoleucine 128 adopts a B box-type zinc-finger fold. Cysteine 92, histidine 95, cysteine 114, and histidine 120 together coordinate Zn(2+). Residues leucine 189–methionine 225 are a coiled coil. The region spanning leucine 269–threonine 449 is the B30.2/SPRY domain.

The protein belongs to the TRIM/RBCC family.

This Homo sapiens (Human) protein is Tripartite motif-containing protein 64 (TRIM64).